Consider the following 527-residue polypeptide: Serine/threonine-protein kinase NLK (527 aa).

2 sufficient for interaction with DAPK3 regions span residues 1–125 and 124–416; these read MSLC…KAHH and HHHQ…SKRI. Required for interaction with TAB2 regions lie at residues 1-304 and 434-527; these read MSLC…VVTQ and YHTC…LVWE. Disordered regions lie at residues 22-72 and 90-140; these read AAAA…SSAA and QQPY…DIEP. Residues 26-54 show a composition bias toward basic residues; it reads GHHHHHHHHLPHLPPPHLHHHHHPQHHLH. Residues 103–119 are compositionally biased toward low complexity; it reads PGPAAAAPAQVQAAAAA. Residues 122-131 show a composition bias toward basic residues; that stretch reads KAHHHQHSHH. Positions 138–427 constitute a Protein kinase domain; sequence IEPDRPIGYG…AKDALAHPYL (290 aa). ATP is bound by residues 144–152 and Lys-167; that span reads IGYGAFGVV. Asp-264 serves as the catalytic Proton acceptor. Phosphothreonine; by autocatalysis is present on Thr-298. The TQE motif lies at 298–300; that stretch reads TQE. The tract at residues 428 to 527 is required for homodimerization and kinase activation and localization to the nucleus; that stretch reads DEGRLRYHTC…EMPPSPLVWE (100 aa). At Ser-522 the chain carries Phosphoserine.

Belongs to the protein kinase superfamily. CMGC Ser/Thr protein kinase family. MAP kinase subfamily. Homodimer. Homodimerization is required for intermolecular autophosphorylation, kinase activation and nuclear localization. May interact with components of cullin-RING-based SCF (SKP1-CUL1-F-box protein) E3 ubiquitin-protein ligase complexes. Interacts with LEF1, MEF2A, MYBL1 and MYBL2. Interacts with the upstream activating kinases HIPK2 and MAP3K7/TAK1. Interaction with MAP3K7/TAK1 seems to be indirect, and may be mediated by other proteins such as STAT3, TAB1 and TAB2. Interacts with and phosphorylates a number of transcription factors including FOXO1, FOXO3, FOXO4, MYB, NOTCH1 and TCF7L2/TCF4. Interacts with DAPK3/ZIPK, and this interaction may disrupt interaction with transcription factors such as TCF7L2/TCF4. Interacts with RNF138/NARF. Interacts with ATF5; the interaction stabilizes ATF5 at the protein level in a kinase-independent manner. Mg(2+) serves as cofactor. In terms of processing, phosphorylated on Thr-298. Intermolecular autophosphorylation on Thr-298 activates the enzyme.

It is found in the nucleus. The protein localises to the cytoplasm. It catalyses the reaction L-seryl-[protein] + ATP = O-phospho-L-seryl-[protein] + ADP + H(+). The enzyme catalyses L-threonyl-[protein] + ATP = O-phospho-L-threonyl-[protein] + ADP + H(+). Activated by dimerization and subsequent intermolecular autophosphorylation on Thr-298. Activated by the non-canonical Wnt signaling pathway, in which WNT5A treatment leads to activation of MAP3K7/TAK1 and HIPK2, which subsequently phosphorylates and activates this protein. Other cytokines such as IL6 may also activate this regulatory circuit. Serine/threonine-protein kinase that regulates a number of transcription factors with key roles in cell fate determination. Positive effector of the non-canonical Wnt signaling pathway, acting downstream of WNT5A, MAP3K7/TAK1 and HIPK2. Negative regulator of the canonical Wnt/beta-catenin signaling pathway. Binds to and phosphorylates TCF7L2/TCF4 and LEF1, promoting the dissociation of the TCF7L2/LEF1/beta-catenin complex from DNA, as well as the ubiquitination and subsequent proteolysis of LEF1. Together these effects inhibit the transcriptional activation of canonical Wnt/beta-catenin target genes. Negative regulator of the Notch signaling pathway. Binds to and phosphorylates NOTCH1, thereby preventing the formation of a transcriptionally active ternary complex of NOTCH1, RBPJ/RBPSUH and MAML1. Negative regulator of the MYB family of transcription factors. Phosphorylation of MYB leads to its subsequent proteolysis while phosphorylation of MYBL1 and MYBL2 inhibits their interaction with the coactivator CREBBP. Other transcription factors may also be inhibited by direct phosphorylation of CREBBP itself. Acts downstream of IL6 and MAP3K7/TAK1 to phosphorylate STAT3, which is in turn required for activation of NLK by MAP3K7/TAK1. Upon IL1B stimulus, cooperates with ATF5 to activate the transactivation activity of C/EBP subfamily members. Phosphorylates ATF5 but also stabilizes ATF5 protein levels in a kinase-independent manner. Acts as an inhibitor of the mTORC1 complex in response to osmotic stress by mediating phosphorylation of RPTOR, thereby preventing recruitment of the mTORC1 complex to lysosomes. The polypeptide is Serine/threonine-protein kinase NLK (NLK) (Homo sapiens (Human)).